Consider the following 416-residue polypeptide: MDPNQGNPLEPQDSPEIPKPSLNLSSILAKSTLPQEPPSMVGDRLPPKTGAVVIDMGTGTCKVGFAGQARPTYTVATIVGCQPQKPATSGQPVMETFIGEAARKRPELTLVQPVHSGIVVDWDAAELIWRHMLEHDLRVATRDHPLLFSDPPFSPSTNREKLVEVAFESLSSPAMYVASQSVLSVYAHGRVSGLVVDTGHGVTYTVPVFQGYNLPHATQRLDLAGTHLTAFLAEMLLGSGLPLGQQDLDTVENIKHRYCYVAPDFLKEQARPELECRQTLKLPDGRTVTLGKELFQCPELLFSPPEIPGLSPVGVPTMAQQSLSKVAAELRTDLAQNVLLCGGSSLFTGFQARFQTELLRNLPPEAHVVVMAQPTRNFSVWIGGSILASLRTFQSCWVLREQYEEQGPYIVYRKCY.

A disordered region spans residues 1 to 23; the sequence is MDPNQGNPLEPQDSPEIPKPSLN.

Belongs to the actin family. As to quaternary structure, interacts with ACTL7A.

It localises to the cytoplasmic vesicle. The protein resides in the secretory vesicle. It is found in the acrosome. The protein localises to the cytoplasm. Its subcellular location is the cytoskeleton. It localises to the perinuclear theca. Functionally, testis-specic protein that plays an important role in fusion of proacrosomal vesicles and perinuclear theca formation. This chain is Actin-like protein 9 (ACTL9), found in Bos taurus (Bovine).